A 698-amino-acid chain; its full sequence is Adhesion G protein-coupled receptor F4 (698 aa).

An N-terminal signal peptide occupies residues 1–19 (MKPWIAMVCCLVFFLTTEC). The Extracellular portion of the chain corresponds to 20-409 (SHSKPKTHRK…VKNTILNHIT (390 aa)). Asn61, Asn168, Asn213, Asn268, Asn290, Asn344, and Asn375 each carry an N-linked (GlcNAc...) asparagine glycan. Residues 250–401 (RISHSSSEHS…SILMSSKPVK (152 aa)) form the GAIN-B domain. Intrachain disulfides connect Cys353–Cys380 and Cys368–Cys382. Positions 353 to 401 (CVSWDPATGQWDESPCTVMSDINSTVKCRCRHTKAVTSFSILMSSKPVK) are GPS. The helical transmembrane segment at 410–430 (FIGLSISIFSLVLCLVIEAIV) threads the bilayer. Over 431–444 (WSRVVVTEISYMRH) the chain is Cytoplasmic. The chain crosses the membrane as a helical span at residues 445-465 (VCIVNIAVSLLTANVWFIIGS). N-linked (GlcNAc...) asparagine glycosylation is present at Asn466. Residues 466–486 (NFSANVQEDHKWCVAVTFLCH) lie on the Extracellular side of the membrane. The helical transmembrane segment at 487–507 (FFFLSLFFWMLFKALLIVYGI) threads the bilayer. The Cytoplasmic portion of the chain corresponds to 508–518 (LVVFRRMMKSR). A helical transmembrane segment spans residues 519–539 (MMAIGFAIGYGCPLVIAVITV). The Extracellular portion of the chain corresponds to 540–566 (TVTEPGEGYTRKDACWLNWNQTKALFA). N-linked (GlcNAc...) asparagine glycosylation occurs at Asn559. A helical membrane pass occupies residues 567–587 (FAIPALAIVAVNLLVVLAVAI). Over 588-611 (NTQRPLIGSSKSQDMAIVFRISKN) the chain is Cytoplasmic. A helical membrane pass occupies residues 612 to 632 (VAILTPLLGLTWGFGLTTLLE). At 633–635 (GVH) the chain is on the extracellular side. Residues 636–656 (LVFHIIFALLNAFQGFFILLF) traverse the membrane as a helical segment. Residues 657 to 698 (GTIMDHKIRDALRMRVSSLKGKSRAAEKVSLSPANGSRILNR) are Cytoplasmic-facing.

The protein belongs to the G-protein coupled receptor 2 family. Adhesion G-protein coupled receptor (ADGR) subfamily. As to expression, expressed in squamous epithelia.

It is found in the membrane. In terms of biological role, orphan receptor. This Mus musculus (Mouse) protein is Adhesion G protein-coupled receptor F4 (Adgrf4).